The following is a 145-amino-acid chain: Cell wall teichoic acid glycosylation protein GtcA (145 aa).

4 helical membrane-spanning segments follow: residues 21 to 41, 52 to 69, 96 to 116, and 121 to 141; these read ILMY…TFWL, IANT…YFSN, FLTY…LSIN, and KIWT…WIIF.

The protein belongs to the GtrA family.

The protein resides in the cell membrane. Involved in the decoration of cell wall teichoic acid with galactose and glucose. This chain is Cell wall teichoic acid glycosylation protein GtcA (gtcA), found in Listeria monocytogenes serovar 1/2a (strain ATCC BAA-679 / EGD-e).